The chain runs to 211 residues: Cytidylate kinase (211 aa).

Residue 7–15 coordinates ATP; sequence GPAASGKGT.

It belongs to the cytidylate kinase family. Type 1 subfamily.

The protein resides in the cytoplasm. It carries out the reaction CMP + ATP = CDP + ADP. The catalysed reaction is dCMP + ATP = dCDP + ADP. The sequence is that of Cytidylate kinase from Rhodopseudomonas palustris (strain BisA53).